Here is a 174-residue protein sequence, read N- to C-terminus: MKKLYKAITVICILMSNLQSAQGATKSVQVPIRTEVKIPTCQLEIDSSIDFSFVKIEDIISSRATSKEANLNFRCDAHVDNVRIMFVPGSNRTSSDKRVMHSGTTGLGYSLQWSRASSGYSDIGFNTQYQWSDSDAYQNLLSGKLRLKPVSFPGESLSKEGKVSSTINIEVTYD.

An N-terminal signal peptide occupies residues 1–21 (MKKLYKAITVICILMSNLQSA). Cys41 and Cys75 are joined by a disulfide.

The protein localises to the fimbrium. Functionally, involved in the biosynthesis of K99 fimbriae. In Escherichia coli, this protein is Protein FanG (fanG).